A 187-amino-acid chain; its full sequence is V-type ATP synthase subunit E (187 aa).

Belongs to the V-ATPase E subunit family.

Produces ATP from ADP in the presence of a proton gradient across the membrane. In Geotalea uraniireducens (strain Rf4) (Geobacter uraniireducens), this protein is V-type ATP synthase subunit E.